A 237-amino-acid chain; its full sequence is Glutathione S-transferase L1 (237 aa).

In terms of domain architecture, GST N-terminal spans 29-110 (GTTRLYISYT…YVDSNFDGPS (82 aa)). Glutathione contacts are provided by residues 39-40 (CP), 67-68 (NR), 81-82 (KV), and 94-95 (ES). The GST C-terminal domain occupies 112 to 232 (YPEDSAKREF…KTDSEYVVNY (121 aa)).

It belongs to the GST superfamily. Lambda family.

It is found in the cytoplasm. It localises to the cytosol. The enzyme catalyses RX + glutathione = an S-substituted glutathione + a halide anion + H(+). In terms of biological role, catalyzes the glutathione-dependent reduction of S-glutathionylquercetin to quercetin. In vitro, possesses glutathione-dependent thiol transferase activity toward 2-hydroxyethyl disulfide (HED). The protein is Glutathione S-transferase L1 (GSTL1) of Arabidopsis thaliana (Mouse-ear cress).